Consider the following 388-residue polypeptide: Succinate--CoA ligase [ADP-forming] subunit beta (388 aa).

Positions 9-245 constitute an ATP-grasp domain; the sequence is KELLAGYGLP…KSQENERELK (237 aa). Residues Lys46, 53–55, Glu100, Tyr103, and Glu108 each bind ATP; that span reads GRG. The Mg(2+) site is built by Asn200 and Asp214. Substrate-binding positions include Asn265 and 322–324; that span reads GIV.

It belongs to the succinate/malate CoA ligase beta subunit family. In terms of assembly, heterotetramer of two alpha and two beta subunits. Mg(2+) serves as cofactor.

The enzyme catalyses succinate + ATP + CoA = succinyl-CoA + ADP + phosphate. It carries out the reaction GTP + succinate + CoA = succinyl-CoA + GDP + phosphate. Its pathway is carbohydrate metabolism; tricarboxylic acid cycle; succinate from succinyl-CoA (ligase route): step 1/1. In terms of biological role, succinyl-CoA synthetase functions in the citric acid cycle (TCA), coupling the hydrolysis of succinyl-CoA to the synthesis of either ATP or GTP and thus represents the only step of substrate-level phosphorylation in the TCA. The beta subunit provides nucleotide specificity of the enzyme and binds the substrate succinate, while the binding sites for coenzyme A and phosphate are found in the alpha subunit. The chain is Succinate--CoA ligase [ADP-forming] subunit beta from Neisseria meningitidis serogroup C / serotype 2a (strain ATCC 700532 / DSM 15464 / FAM18).